The primary structure comprises 117 residues: G antigen 12H (117 aa).

Residues 1-117 (MSWRGRSTYY…PEEGEKQSQC (117 aa)) form a disordered region. 2 stretches are compositionally biased toward acidic residues: residues 32–45 (FSDEVEPATPEEGE) and 87–96 (ECEDGPDGQE). The segment covering 103 to 117 (EEVKTPEEGEKQSQC) has biased composition (basic and acidic residues).

The protein belongs to the GAGE family.

The chain is G antigen 12H (GAGE12H) from Homo sapiens (Human).